Reading from the N-terminus, the 310-residue chain is Urease accessory protein UreD (310 aa).

This sequence belongs to the UreD family. UreD, UreF and UreG form a complex that acts as a GTP-hydrolysis-dependent molecular chaperone, activating the urease apoprotein by helping to assemble the nickel containing metallocenter of UreC. The UreE protein probably delivers the nickel.

It is found in the cytoplasm. Required for maturation of urease via the functional incorporation of the urease nickel metallocenter. This Synechococcus sp. (strain RCC307) protein is Urease accessory protein UreD.